The chain runs to 360 residues: Photosystem II protein D1 1 (360 aa).

The Cytoplasmic segment spans residues 2 to 31 (TTTLQRRESANLWERFCNWVTSTDNRLYVG). Residues 32-53 (WFGVIMIPTLLAATICFVIAFI) traverse the membrane as a helical segment. Over 54–110 (AAPPVDIDGIREPVSGSLLYGNNIITGAVVPSSNAIGLHFYPIWEAASLDEWLYNGG) the chain is Lumenal. The helical transmembrane segment at 111 to 132 (PYQLIIFHFLLGASCYMGRQWE) threads the bilayer. H118 is a binding site for chlorophyll a. Residues Y126 and Q130 each contribute to the pheophytin a site. Residues 133 to 142 (LSYRLGMRPW) lie on the Cytoplasmic side of the membrane. A helical transmembrane segment spans residues 143-163 (ICVAYSAPLASAFAVFLIYPI). Y147 serves as a coordination point for pheophytin a. The Lumenal segment spans residues 164 to 191 (GQGSFSDGMPLGISGTFNFMIVFQAEHN). Residues D170 and E189 each contribute to the [CaMn4O5] cluster site. The chain crosses the membrane as a helical span at residues 192–217 (ILMHPFHQLGVAGVFGGALFCAMHGS). H198 is a chlorophyll a binding site. A quinone is bound by residues H215 and 264–265 (SF). Position 215 (H215) interacts with Fe cation. The Cytoplasmic segment spans residues 218-272 (LVTSSLIRETTETESANYGYKFGQEEETYNIVAAHGYFGRLIFQYASFNNSRSLH). Position 272 (H272) interacts with Fe cation. A helical membrane pass occupies residues 273-295 (FFLAAWPVVGVWFTALGISTMAF). Topologically, residues 296 to 344 (NLNGFNFNHSVIDAKGNVINTWADIINRANLGMEVMHERNAHNFPLDLA) are lumenal. [CaMn4O5] cluster contacts are provided by H332, E333, D342, and A344. A propeptide spanning residues 345–360 (SAESAPVAMIAPSING) is cleaved from the precursor.

Belongs to the reaction center PufL/M/PsbA/D family. In terms of assembly, PSII is composed of 1 copy each of membrane proteins PsbA, PsbB, PsbC, PsbD, PsbE, PsbF, PsbH, PsbI, PsbJ, PsbK, PsbL, PsbM, PsbT, PsbX, PsbY, PsbZ, Psb30/Ycf12, peripheral proteins PsbO, CyanoQ (PsbQ), PsbU, PsbV and a large number of cofactors. It forms dimeric complexes. Precursor protein interacts with Ycf48. Part of a photosystem II (PSII) assembly intermediate complex PSII-I; crystallized from a strain deleted of psbJ, it forms monomeric PSII before addition of the oxygen evolving complex. PSII-I includes 3 assembly factors not found in mature PSII (Psb27, Psb28 and Psb34). In PSII-I the C-terminus of D1 (this subunit) is already processed but not yet found at its final position. It depends on The D1/D2 heterodimer binds P680, chlorophylls that are the primary electron donor of PSII, and subsequent electron acceptors. It shares a non-heme iron and each subunit binds pheophytin, quinone, additional chlorophylls, carotenoids and lipids. D1 provides most of the ligands for the Mn4-Ca-O5 cluster of the oxygen-evolving complex (OEC). There is also a Cl(-1) ion associated with D1 and D2, which is required for oxygen evolution. PSII binds additional chlorophylls, carotenoids and specific lipids. as a cofactor. Post-translationally, C-terminally processed by CtpA; processing is essential to allow assembly of the oxygen-evolving complex and thus photosynthetic growth. In terms of processing, tyr-161 forms a radical intermediate that is referred to as redox-active TyrZ, YZ or Y-Z.

Its subcellular location is the cellular thylakoid membrane. The catalysed reaction is 2 a plastoquinone + 4 hnu + 2 H2O = 2 a plastoquinol + O2. Photosystem II (PSII) is a light-driven water:plastoquinone oxidoreductase that uses light energy to abstract electrons from H(2)O, generating O(2) and a proton gradient subsequently used for ATP formation. It consists of a core antenna complex that captures photons, and an electron transfer chain that converts photonic excitation into a charge separation. The D1/D2 (PsbA/PsbD) reaction center heterodimer binds P680, the primary electron donor of PSII as well as several subsequent electron acceptors. In Thermosynechococcus vestitus (strain NIES-2133 / IAM M-273 / BP-1), this protein is Photosystem II protein D1 1.